We begin with the raw amino-acid sequence, 740 residues long: Catalase-peroxidase (740 aa).

The tryptophyl-tyrosyl-methioninium (Trp-Tyr) (with M-255) cross-link spans 107 to 229 (WHAAGTYRIH…LAAVQMGLIY (123 aa)). Histidine 108 (proton acceptor) is an active-site residue. The segment at residues 229–255 (YVNPEGPNGNPDPMAAAVDIRETFRRM) is a cross-link (tryptophyl-tyrosyl-methioninium (Tyr-Met) (with W-107)). Residue histidine 270 coordinates heme b. Residue tryptophan 321 is the Tryptophan radical intermediate of the active site.

It belongs to the peroxidase family. Peroxidase/catalase subfamily. In terms of assembly, homodimer. Heme b is required as a cofactor. In terms of processing, formation of the three residue Trp-Tyr-Met cross-link is important for the catalase, but not the peroxidase activity of the enzyme.

The enzyme catalyses H2O2 + AH2 = A + 2 H2O. It catalyses the reaction 2 H2O2 = O2 + 2 H2O. Functionally, bifunctional enzyme with both catalase and broad-spectrum peroxidase activity, oxidizing various electron donors including NADP(H). Protects M.tuberculosis against toxic reactive oxygen species (ROS) including hydrogen peroxide as well as organic peroxides and thus contributes to its survival within host macrophages by countering the phagocyte oxidative burst. Also displays efficient peroxynitritase activity, which may help the bacterium to persist in macrophages. Its function is as follows. Catalyzes the oxidative activation of the antitubercular pro-drug isoniazid (INH) to generate an isonicotinoyl radical that then reacts nonenzymatically with NAD to form an isonicotinoyl-NAD adduct which inhibits InhA. In Mycobacterium tuberculosis (strain CDC 1551 / Oshkosh), this protein is Catalase-peroxidase.